The sequence spans 87 residues: Phosphocarrier protein HPr (87 aa).

Positions 1–87 constitute an HPr domain; that stretch reads MEKIFKVTSD…ETMKNEGLGE (87 aa). The active-site Pros-phosphohistidine intermediate; alternate is the His14. Residue His14 is modified to Tele-phosphohistidine; alternate. Residue Ser45 is modified to Phosphoserine; by HPrK/P.

Belongs to the HPr family. The form phosphorylated at the tele nitrogen (N(epsilon)2), instead of the expected pros nitrogen (N(delta)1), of His-14 is not able to transfer its phosphoryl group to the B.subtilis EIIA-Glc domain. This form may be inactive in PTS-catalyzed sugar transport or target an as yet unknown acceptor molecule in an alternative metabolic process.

It localises to the cytoplasm. Phosphorylation on Ser-45 inhibits the phosphoryl transfer from enzyme I to HPr. In terms of biological role, general (non sugar-specific) component of the phosphoenolpyruvate-dependent sugar phosphotransferase system (sugar PTS). This major carbohydrate active-transport system catalyzes the phosphorylation of incoming sugar substrates concomitantly with their translocation across the cell membrane. The phosphoryl group from phosphoenolpyruvate (PEP) is transferred to the phosphoryl carrier protein HPr by enzyme I. Phospho-HPr then transfers it to the PTS EIIA domain. P-Ser-HPr interacts with the catabolite control protein A (CcpA), forming a complex that binds to DNA at the catabolite response elements cre, operator sites preceding a large number of catabolite-regulated genes. Thus, P-Ser-HPr is a corepressor in carbon catabolite repression (CCR), a mechanism that allows bacteria to coordinate and optimize the utilization of available carbon sources. P-Ser-HPr mediates glucose catabolite repression of cry4A toxin expression. In Bacillus thuringiensis subsp. israelensis, this protein is Phosphocarrier protein HPr (ptsH).